The chain runs to 341 residues: Phosphate acyltransferase (341 aa).

The protein belongs to the PlsX family. In terms of assembly, homodimer. Probably interacts with PlsY.

The protein resides in the cytoplasm. It catalyses the reaction a fatty acyl-[ACP] + phosphate = an acyl phosphate + holo-[ACP]. It participates in lipid metabolism; phospholipid metabolism. In terms of biological role, catalyzes the reversible formation of acyl-phosphate (acyl-PO(4)) from acyl-[acyl-carrier-protein] (acyl-ACP). This enzyme utilizes acyl-ACP as fatty acyl donor, but not acyl-CoA. The chain is Phosphate acyltransferase from Nostoc sp. (strain PCC 7120 / SAG 25.82 / UTEX 2576).